We begin with the raw amino-acid sequence, 172 residues long: Protein GrpE (172 aa).

The disordered stretch occupies residues 1–23; the sequence is MNQDHPECDSEELTQNSPETDPL.

Belongs to the GrpE family. As to quaternary structure, homodimer.

It localises to the cytoplasm. Functionally, participates actively in the response to hyperosmotic and heat shock by preventing the aggregation of stress-denatured proteins, in association with DnaK and GrpE. It is the nucleotide exchange factor for DnaK and may function as a thermosensor. Unfolded proteins bind initially to DnaJ; upon interaction with the DnaJ-bound protein, DnaK hydrolyzes its bound ATP, resulting in the formation of a stable complex. GrpE releases ADP from DnaK; ATP binding to DnaK triggers the release of the substrate protein, thus completing the reaction cycle. Several rounds of ATP-dependent interactions between DnaJ, DnaK and GrpE are required for fully efficient folding. The polypeptide is Protein GrpE (Xylella fastidiosa (strain 9a5c)).